The chain runs to 481 residues: 5-hydroxytryptamine receptor 2B (481 aa).

At 1-56 the chain is on the extracellular side; that stretch reads MALSYRVSELQSTIPEHILQSTFVHVISSNWSGLQTESIPEEMKQIVEEQGNKLHW. A glycan (N-linked (GlcNAc...) asparagine) is linked at Asn30. The helical transmembrane segment at 57 to 79 threads the bilayer; that stretch reads AALLILMVIIPTIGGNTLVILAV. The Cytoplasmic segment spans residues 80-90; the sequence is SLEKKLQYATN. The helical transmembrane segment at 91-113 threads the bilayer; it reads YFLMSLAVADLLVGLFVMPIALL. Residues 114-129 are Extracellular-facing; that stretch reads TIMFEAMWPLPLVLCP. A disulfide bridge links Cys128 with Cys207. Residues 130–151 traverse the membrane as a helical segment; that stretch reads AWLFLDVLFSTASIMHLCAISV. Ergotamine-binding residues include Asp135 and Thr140. Residues 152–154 carry the DRY motif; important for ligand-induced conformation changes motif; that stretch reads DRY. The Cytoplasmic segment spans residues 152–171; that stretch reads DRYIAIKKPIQANQYNSRAT. Residues 172-192 form a helical membrane-spanning segment; the sequence is AFIKITVVWLISIGIAIPVPI. At 193 to 216 the chain is on the extracellular side; the sequence is KGIETDVDNPNNITCVLTKERFGD. Leu209 contributes to the ergotamine binding site. The short motif at 212 to 215 is the [DE]RFG motif; may stabilize a conformation that preferentially activates signaling via beta-arrestin family members element; that stretch reads ERFG. A helical membrane pass occupies residues 217-239; that stretch reads FMLFGSLAAFFTPLAIMIVTYFL. Residues 240-324 are Cytoplasmic-facing; sequence TIHALQKKAY…TISNEQRASK (85 aa). The helical transmembrane segment at 325 to 345 threads the bilayer; it reads VLGIVFFLFLLMWCPFFITNI. The Extracellular segment spans residues 346–360; that stretch reads TLVLCDSCNQTTLQM. Residues Cys350 and Cys353 are joined by a disulfide bond. The chain crosses the membrane as a helical span at residues 361 to 382; sequence LLEIFVWIGYVSSGVNPLVYTL. The short motif at 376-380 is the NPxxY motif; important for ligand-induced conformation changes and signaling element; the sequence is NPLVY. At 383 to 481 the chain is on the cytoplasmic side; that stretch reads FNKTFRDAFG…DKTEEQVSYV (99 aa). The S-palmitoyl cysteine moiety is linked to residue Cys397. A PDZ-binding motif is present at residues 479–481; it reads SYV.

This sequence belongs to the G-protein coupled receptor 1 family. Interacts (via C-terminus) with MPDZ. In terms of tissue distribution, ubiquitous. Detected in liver, kidney, heart, pulmonary artery, and intestine. Detected at lower levels in blood, placenta and brain, especially in cerebellum, occipital cortex and frontal cortex.

The protein resides in the cell membrane. It is found in the synapse. It localises to the synaptosome. Its function is as follows. G-protein coupled receptor for 5-hydroxytryptamine (serotonin). Also functions as a receptor for various ergot alkaloid derivatives and psychoactive substances. Ligand binding causes a conformation change that triggers signaling via guanine nucleotide-binding proteins (G proteins) and modulates the activity of downstream effectors. HTR2B is coupled to G(q)/G(11) G alpha proteins and activates phospholipase C-beta, releasing diacylglycerol (DAG) and inositol 1,4,5-trisphosphate (IP3) second messengers that modulate the activity of phosphatidylinositol 3-kinase and promote the release of Ca(2+) ions from intracellular stores, respectively. Beta-arrestin family members inhibit signaling via G proteins and mediate activation of alternative signaling pathways. Plays a role in the regulation of dopamine and 5-hydroxytryptamine release, 5-hydroxytryptamine uptake and in the regulation of extracellular dopamine and 5-hydroxytryptamine levels, and thereby affects neural activity. May play a role in the perception of pain. Plays a role in the regulation of behavior, including impulsive behavior. Required for normal proliferation of embryonic cardiac myocytes and normal heart development. Protects cardiomyocytes against apoptosis. Plays a role in the adaptation of pulmonary arteries to chronic hypoxia. Plays a role in vasoconstriction. Required for normal osteoblast function and proliferation, and for maintaining normal bone density. Required for normal proliferation of the interstitial cells of Cajal in the intestine. The polypeptide is 5-hydroxytryptamine receptor 2B (Homo sapiens (Human)).